Reading from the N-terminus, the 356-residue chain is MKRELLLEKIEEYKSLMPWFVLEYYQSKLSVPYSFTTLYEYLKEYKRFFNWLIDSGISDADDIASIHIKTLENLTKKDMESFVLYLRERPSLNTYSKKQGVSQTTINRTLSALSSLYKYLTEEVEGPDGEPYFYRNVMKKISTKKKKETLAARAENIKQKLFLGDETMKFLDYVENEYEVKLSNRAKSSFYKNKERDLAIIALLLSSGVRLSEAVNLDLKDINLKRMVIDVTRKGGQRDSVNMASFARPYLENYLSIRNKRYKAEKQDVALFLTEYRGVPNRIDASSIEKMVAKYSQDFKIRVTPHKLRHTLATRLYDATKSQVLVSHQLGHASTQVTDLYTHIVNDEQKNALDNL.

Residues 16-121 (LMPWFVLEYY…ALSSLYKYLT (106 aa)) form the Core-binding (CB) domain. The 186-residue stretch at 169–354 (KFLDYVENEY…VNDEQKNALD (186 aa)) folds into the Tyr recombinase domain. Active-site residues include R210, K234, H306, R309, and H332. Y341 (O-(3'-phospho-DNA)-tyrosine intermediate) is an active-site residue.

This sequence belongs to the 'phage' integrase family. XerS subfamily.

It is found in the cytoplasm. Its activity is regulated as follows. FtsK is required for recombination. Functionally, site-specific tyrosine recombinase, which acts by catalyzing the cutting and rejoining of the recombining DNA molecules. Essential to convert dimers of the bacterial chromosome into monomers to permit their segregation at cell division. In Streptococcus thermophilus (strain CNRZ 1066), this protein is Tyrosine recombinase XerS.